The primary structure comprises 366 residues: tRNA/tmRNA (uracil-C(5))-methyltransferase (366 aa).

S-adenosyl-L-methionine is bound by residues Gln190, Tyr218, Asn223, Glu239, and Asp299. Catalysis depends on Cys324, which acts as the Nucleophile. Glu358 functions as the Proton acceptor in the catalytic mechanism.

This sequence belongs to the class I-like SAM-binding methyltransferase superfamily. RNA M5U methyltransferase family. TrmA subfamily.

It carries out the reaction uridine(54) in tRNA + S-adenosyl-L-methionine = 5-methyluridine(54) in tRNA + S-adenosyl-L-homocysteine + H(+). The catalysed reaction is uridine(341) in tmRNA + S-adenosyl-L-methionine = 5-methyluridine(341) in tmRNA + S-adenosyl-L-homocysteine + H(+). Dual-specificity methyltransferase that catalyzes the formation of 5-methyluridine at position 54 (m5U54) in all tRNAs, and that of position 341 (m5U341) in tmRNA (transfer-mRNA). This Klebsiella pneumoniae (strain 342) protein is tRNA/tmRNA (uracil-C(5))-methyltransferase.